A 293-amino-acid polypeptide reads, in one-letter code: 4-hydroxy-tetrahydrodipicolinate synthase (293 aa).

Thr-46 is a binding site for pyruvate. Tyr-133 (proton donor/acceptor) is an active-site residue. Residue Lys-161 is the Schiff-base intermediate with substrate of the active site. Residue Val-202 participates in pyruvate binding.

The protein belongs to the DapA family. Homotetramer; dimer of dimers.

The protein localises to the cytoplasm. It catalyses the reaction L-aspartate 4-semialdehyde + pyruvate = (2S,4S)-4-hydroxy-2,3,4,5-tetrahydrodipicolinate + H2O + H(+). Its pathway is amino-acid biosynthesis; L-lysine biosynthesis via DAP pathway; (S)-tetrahydrodipicolinate from L-aspartate: step 3/4. Catalyzes the condensation of (S)-aspartate-beta-semialdehyde [(S)-ASA] and pyruvate to 4-hydroxy-tetrahydrodipicolinate (HTPA). This chain is 4-hydroxy-tetrahydrodipicolinate synthase, found in Wolbachia pipientis wMel.